The following is a 318-amino-acid chain: Small ribosomal subunit protein uS2 (318 aa).

This sequence belongs to the universal ribosomal protein uS2 family.

The protein is Small ribosomal subunit protein uS2 of Mesomycoplasma hyopneumoniae (strain J / ATCC 25934 / NCTC 10110) (Mycoplasma hyopneumoniae).